Consider the following 1137-residue polypeptide: Voltage-dependent calcium channel subunit alpha-2/delta-4 (1137 aa).

An N-terminal signal peptide occupies residues 1-19 (MVCGCSALLPLPNPRPTMP). Residues 20–1115 (ATPNFLANPS…AQDCGGASDT (1096 aa)) are Extracellular-facing. The N-linked (GlcNAc...) asparagine glycan is linked to N201. The VWFA domain occupies 291–473 (DIVILVDVSG…ENVMEYLHVL (183 aa)). Positions 297, 299, and 301 each coordinate a divalent metal cation. The short motif at 297 to 301 (DVSGS) is the MIDAS-like motif element. An intrachain disulfide couples C447 to C1097. Residues 487–580 (WTEAYMDSKL…RPLYREGKKL (94 aa)) enclose the Cache domain. N-linked (GlcNAc...) asparagine glycosylation is present at N664. The helical transmembrane segment at 1116–1136 (SASPPLLLLPVCAWGLLPQLL) threads the bilayer. A topological domain (cytoplasmic) is located at residue R1137.

It belongs to the calcium channel subunit alpha-2/delta family. As to quaternary structure, dimer formed of alpha-2-2 and delta-2 chains; disulfide-linked. Voltage-dependent calcium channels are multisubunit complexes, consisting of alpha-1 (CACNA1), alpha-2 (CACNA2D), beta (CACNB) and delta (CACNA2D) subunits in a 1:1:1:1 ratio. Interacts with CACNA1C and CACNB3. In terms of processing, may be proteolytically processed into subunits alpha-2-4 and delta-4 that are disulfide-linked. It is however unclear whether such cleavage really takes place in vivo and has a functional role. Predominantly expressed in certain types of endocrine cells. Present in the Paneth cells of the small intestine. Also present in the erythroblasts in the fetal liver, in the cells of the zona reticularis of the adrenal gland and in the basophils of the pituitary. Present at low level in some brain regions such as the cerebellum (at protein level).

It localises to the membrane. Its function is as follows. The alpha-2/delta subunit of voltage-dependent calcium channels regulates calcium current density and activation/inactivation kinetics of the calcium channel. This Homo sapiens (Human) protein is Voltage-dependent calcium channel subunit alpha-2/delta-4 (CACNA2D4).